Consider the following 340-residue polypeptide: Ribosomal RNA large subunit methyltransferase F (340 aa).

It belongs to the methyltransferase superfamily. METTL16/RlmF family.

Its subcellular location is the cytoplasm. It catalyses the reaction adenosine(1618) in 23S rRNA + S-adenosyl-L-methionine = N(6)-methyladenosine(1618) in 23S rRNA + S-adenosyl-L-homocysteine + H(+). Its function is as follows. Specifically methylates the adenine in position 1618 of 23S rRNA. The protein is Ribosomal RNA large subunit methyltransferase F of Dechloromonas aromatica (strain RCB).